Consider the following 268-residue polypeptide: Tryptophan synthase alpha chain (268 aa).

Residues Glu40 and Asp51 each act as proton acceptor in the active site.

This sequence belongs to the TrpA family. Tetramer of two alpha and two beta chains.

It carries out the reaction (1S,2R)-1-C-(indol-3-yl)glycerol 3-phosphate + L-serine = D-glyceraldehyde 3-phosphate + L-tryptophan + H2O. It functions in the pathway amino-acid biosynthesis; L-tryptophan biosynthesis; L-tryptophan from chorismate: step 5/5. Functionally, the alpha subunit is responsible for the aldol cleavage of indoleglycerol phosphate to indole and glyceraldehyde 3-phosphate. This chain is Tryptophan synthase alpha chain, found in Geobacillus kaustophilus (strain HTA426).